A 505-amino-acid polypeptide reads, in one-letter code: Flagellin (505 aa).

Belongs to the bacterial flagellin family.

It is found in the secreted. The protein localises to the bacterial flagellum. Functionally, flagellin is the subunit protein which polymerizes to form the filaments of bacterial flagella. In Salmonella senftenberg, this protein is Flagellin (fliC).